Consider the following 1128-residue polypeptide: Mastermind-like protein 2 (1128 aa).

Disordered stretches follow at residues 1 to 22 (MGDT…GAGL) and 81 to 167 (QHGQ…GDQR). Over residues 12-22 (GGLGGAPGAGL) the composition is skewed to gly residues. The span at 113 to 122 (PTASQTAAPA) shows a compositional bias: low complexity. Residue serine 177 is modified to Phosphoserine. Disordered regions lie at residues 343–509 (FNID…GSNQ), 521–649 (SPSA…SNQP), 677–714 (QVSQ…GYMN), 758–794 (QDQI…GSST), and 1039–1073 (GTGL…QGTD). 2 stretches are compositionally biased toward polar residues: residues 347-357 (LGQQSQRSTPR) and 374-387 (GLTQ…QLRP). A compositionally biased stretch (low complexity) spans 395–426 (SMASSGLSASSPIPSVPQSQAQPPPATGAARA). Positions 431–446 (QEVSHAQQLKQIAANR) are enriched in polar residues. Composition is skewed to low complexity over residues 453-473 (HQQQ…SAGP) and 484-497 (PSPS…SPQS). Positions 566–584 (NSDQANQQMPSVLPSQSKP) are enriched in polar residues. Residues 590-649 (TQQQPQQSSITVQPQQQQQQPQQQQQPQQQQQPQPQQQQQQQPQAQQPAAQPTQPLSNQP) are compositionally biased toward low complexity. Polar residues-rich tracts occupy residues 677 to 695 (QVSQ…QNAG), 778 to 794 (NVGN…GSST), and 1039 to 1052 (GTGL…SQPP).

This sequence belongs to the mastermind family. Interacts through its N-terminal region with the ankyrin repeat region of the Notch proteins NOTCH1, NOTCH2, NOTCH3 and NOTCH4. Forms a DNA-binding complex with Notch proteins and RBPSUH/RBP-J kappa.

Its subcellular location is the nucleus speckle. Functionally, acts as a transcriptional coactivator for NOTCH proteins. Has been shown to amplify NOTCH-induced transcription of HES1. Potentiates activation by NOTCH3 and NOTCH4 more efficiently than MAML1 or MAML3. The protein is Mastermind-like protein 2 (MAML2) of Bos taurus (Bovine).